Here is a 297-residue protein sequence, read N- to C-terminus: Cyclin-dependent kinase 1 (297 aa).

Residues Tyr4–Leu293 enclose the Protein kinase domain. ATP contacts are provided by residues Ile10–Val18 and Lys33. Position 14 is a phosphothreonine (Thr14). Tyr15 carries the phosphotyrosine modification. Asp134 (proton acceptor) is an active-site residue. Thr167 carries the post-translational modification Phosphothreonine.

This sequence belongs to the protein kinase superfamily. CMGC Ser/Thr protein kinase family. CDC2/CDKX subfamily. As to quaternary structure, forms a stable but non-covalent complex with regulatory subunit suc1 and with a cyclin. Interacts with cyclin cdc13. Interacts with cyclin cig2. Interacts with cdc37.

The protein localises to the cytoplasm. The catalysed reaction is L-seryl-[protein] + ATP = O-phospho-L-seryl-[protein] + ADP + H(+). It carries out the reaction L-threonyl-[protein] + ATP = O-phospho-L-threonyl-[protein] + ADP + H(+). Its activity is regulated as follows. Phosphorylation at Thr-14 or Tyr-15 inactivates the enzyme, while phosphorylation at Thr-167 activates it. Functionally, cyclin-dependent kinase that acts as a master regulator of the mitotic and meiotic cell cycles. Required to drive the G1-S and G2-M transitions, and initiation of premeiotic DNA replication and meiosis II. More than 200 substrates have been identified. Substrate specificity is in part regulated by the bound cyclin protein. When complexed with cyclin cig2, it drives the G1-S phase transition. When complexed with cyclin cdc13, it drives the G2-M transition and initiation of meiosis II. Its activity rises throughout the cell cycle and substrate specificity is further influenced by activity thresholds with more sensitive substrates phosphorylated earlier in the cell cycle than less sensitive substrates. Phosphorylates dis1 during metaphase to ensure proper microtubule dynamics and accurate chromosome segregation. Phosphorylates the repetitive C-terminus of the large subunit of RNA polymerase II rpb1. Inactivated by checkpoint signaling following detection of cellular damage, leading to cell cycle arrest to allow damage repair. Inactivated during G2 DNA damage checkpoint signaling. Inactivated in response to defective RNA splicing. This chain is Cyclin-dependent kinase 1, found in Schizosaccharomyces pombe (strain 972 / ATCC 24843) (Fission yeast).